An 835-amino-acid polypeptide reads, in one-letter code: Cap-specific mRNA (nucleoside-2'-O-)-methyltransferase 1 (835 aa).

Residues 1–66 form a disordered region; that stretch reads MKRRNDSECT…TEGKQRSSDS (66 aa). Positions 2-19 match the Bipartite nuclear localization signal motif; the sequence is KRRNDSECTAPLKKQKKR. Residues S28, S31, S53, S66, and S91 each carry the phosphoserine modification. Positions 57 to 66 are enriched in basic and acidic residues; the sequence is TEGKQRSSDS. A G-patch domain is found at 87 to 133; that stretch reads YNSVSQKLMAKMGFKEGEGLGKYSQGRKDIVEASNQKGRRGLGLTLQ. N6-acetyllysine is present on K108. Substrate is bound by residues 203 to 207 and R218; that span reads KSVFD. The 220-residue stretch at 231-450 folds into the RrmJ-type SAM-dependent 2'-O-MTase domain; it reads FFLNRAAMKM…ERYVVCKGLK (220 aa). N234 contributes to the S-adenosyl-L-methionine binding site. Residue K239 is part of the active site. Residues 277-283 and 335-336 each bind S-adenosyl-L-methionine; these read CAGPGGF and DI. Residue D364 is part of the active site. 374-376 contacts substrate; it reads NLQ. The active-site Proton acceptor is K404. N439 contacts substrate. The tract at residues 727-835 is interaction with POLR2A; that stretch reads SSGTPKLSYT…VLSFIQTHSA (109 aa). Residues 752-786 form the WW domain; the sequence is RTVNEPWTMGFSKSFKRKFFYNKKTKNSTFDLPAD.

As to quaternary structure, interacts with POLR2A (via C-terminus).

It localises to the nucleus. The enzyme catalyses a 5'-end (N(7)-methyl 5'-triphosphoguanosine)-ribonucleoside in mRNA + S-adenosyl-L-methionine = a 5'-end (N(7)-methyl 5'-triphosphoguanosine)-(2'-O-methyl-ribonucleoside) in mRNA + S-adenosyl-L-homocysteine + H(+). Its function is as follows. S-adenosyl-L-methionine-dependent methyltransferase that mediates mRNA cap1 2'-O-ribose methylation to the 5'-cap structure of mRNAs. Methylates the ribose of the first nucleotide of a m(7)GpppG-capped mRNA and small nuclear RNA (snRNA) to produce m(7)GpppRm (cap1). Displays a preference for cap0 transcripts. Cap1 modification is linked to higher levels of translation. May be involved in the interferon response pathway. In Bos taurus (Bovine), this protein is Cap-specific mRNA (nucleoside-2'-O-)-methyltransferase 1 (CMTR1).